Here is a 589-residue protein sequence, read N- to C-terminus: 2-succinyl-5-enolpyruvyl-6-hydroxy-3-cyclohexene-1-carboxylate synthase (589 aa).

This sequence belongs to the TPP enzyme family. MenD subfamily. In terms of assembly, homodimer. Mg(2+) serves as cofactor. The cofactor is Mn(2+). Thiamine diphosphate is required as a cofactor.

The catalysed reaction is isochorismate + 2-oxoglutarate + H(+) = 5-enolpyruvoyl-6-hydroxy-2-succinyl-cyclohex-3-ene-1-carboxylate + CO2. It functions in the pathway quinol/quinone metabolism; 1,4-dihydroxy-2-naphthoate biosynthesis; 1,4-dihydroxy-2-naphthoate from chorismate: step 2/7. The protein operates within quinol/quinone metabolism; menaquinone biosynthesis. In terms of biological role, catalyzes the thiamine diphosphate-dependent decarboxylation of 2-oxoglutarate and the subsequent addition of the resulting succinic semialdehyde-thiamine pyrophosphate anion to isochorismate to yield 2-succinyl-5-enolpyruvyl-6-hydroxy-3-cyclohexene-1-carboxylate (SEPHCHC). This chain is 2-succinyl-5-enolpyruvyl-6-hydroxy-3-cyclohexene-1-carboxylate synthase, found in Myxococcus xanthus (strain DK1622).